A 239-amino-acid chain; its full sequence is Orotidine 5'-phosphate decarboxylase (239 aa).

Substrate contacts are provided by residues D15, K36, 63–72 (DLKFHDIPNT), T127, R189, Q198, G218, and R219. K65 (proton donor) is an active-site residue.

It belongs to the OMP decarboxylase family. Type 1 subfamily. Homodimer.

It catalyses the reaction orotidine 5'-phosphate + H(+) = UMP + CO2. It functions in the pathway pyrimidine metabolism; UMP biosynthesis via de novo pathway; UMP from orotate: step 2/2. In terms of biological role, catalyzes the decarboxylation of orotidine 5'-monophosphate (OMP) to uridine 5'-monophosphate (UMP). The protein is Orotidine 5'-phosphate decarboxylase of Prochlorococcus marinus subsp. pastoris (strain CCMP1986 / NIES-2087 / MED4).